Consider the following 92-residue polypeptide: Small ribosomal subunit protein uS19c (92 aa).

It belongs to the universal ribosomal protein uS19 family.

It localises to the plastid. Its subcellular location is the chloroplast. Functionally, protein S19 forms a complex with S13 that binds strongly to the 16S ribosomal RNA. The chain is Small ribosomal subunit protein uS19c from Phaeodactylum tricornutum (strain CCAP 1055/1).